Consider the following 213-residue polypeptide: Holliday junction resolvase RecU (213 aa).

Mg(2+) contacts are provided by Thr99, Asp101, Glu114, and Gln133.

The protein belongs to the RecU family. Mg(2+) serves as cofactor.

The protein localises to the cytoplasm. The enzyme catalyses Endonucleolytic cleavage at a junction such as a reciprocal single-stranded crossover between two homologous DNA duplexes (Holliday junction).. Its function is as follows. Endonuclease that resolves Holliday junction intermediates in genetic recombination. Cleaves mobile four-strand junctions by introducing symmetrical nicks in paired strands. Promotes annealing of linear ssDNA with homologous dsDNA. Required for DNA repair, homologous recombination and chromosome segregation. This chain is Holliday junction resolvase RecU, found in Lactococcus lactis subsp. cremoris (strain SK11).